The primary structure comprises 351 residues: Large ribosomal subunit protein uL3 (351 aa).

2 disordered regions span residues 1 to 31 and 246 to 271; these read MGHR…TPRT and KGSR…GQLG.

The protein belongs to the universal ribosomal protein uL3 family. Part of the 50S ribosomal subunit. Forms a cluster with proteins L14 and L24e.

One of the primary rRNA binding proteins, it binds directly near the 3'-end of the 23S rRNA, where it nucleates assembly of the 50S subunit. This chain is Large ribosomal subunit protein uL3, found in Saccharolobus islandicus (strain M.14.25 / Kamchatka #1) (Sulfolobus islandicus).